A 227-amino-acid polypeptide reads, in one-letter code: Endo-1,4-beta-xylanase 11A (227 aa).

A signal peptide spans 1-36 (MVSASSLLLAASAIAGVFSAPAAAPVSENLNVLQER). A GH11 domain is found at 37-227 (ALTSSATGTS…SSGSASITVS (191 aa)). A necrosis inducing domain region spans residues 112–136 (VYGWTTSPLIEYYIVEDFGTYDPSS). E122 functions as the Nucleophile in the catalytic mechanism. E214 acts as the Proton donor in catalysis.

Belongs to the glycosyl hydrolase 11 (cellulase G) family.

Its subcellular location is the secreted. It catalyses the reaction Endohydrolysis of (1-&gt;4)-beta-D-xylosidic linkages in xylans.. It participates in glycan degradation; xylan degradation. Its activity is regulated as follows. Significantly inhibited by the wheat xylanase inhibiting protein I (XIP-I) and the proteinaceous endoxylanase Triticum aestivum xylanase inhibitors I (TAXI-I), whereas no inhibition is detected with TAXI-II. Endo-1,4-beta-xylanase involved in the hydrolysis of xylan, a major structural heterogeneous polysaccharide found in plant biomass representing the second most abundant polysaccharide in the biosphere, after cellulose. Required for plant infection and the appearance of secondary lesions. Is able to induce necrosis on leaves, seedling growth inhibition, induction of a ROS burst, electrolyte leakage, cytoplasm shrinkage, autofluorescence, cell death, and induction of defense genes, and this abilities are independent of the catalytic activity. Only exhibits elicitor activity in certain plants such as tomato, but not in N.benthamiana. In Botryotinia fuckeliana (strain B05.10) (Noble rot fungus), this protein is Endo-1,4-beta-xylanase 11A.